The chain runs to 177 residues: Crossover junction endodeoxyribonuclease RuvC (177 aa).

Residues Asp-8, Glu-72, and Asp-144 contribute to the active site. Positions 8, 72, and 144 each coordinate Mg(2+).

It belongs to the RuvC family. Homodimer which binds Holliday junction (HJ) DNA. The HJ becomes 2-fold symmetrical on binding to RuvC with unstacked arms; it has a different conformation from HJ DNA in complex with RuvA. In the full resolvosome a probable DNA-RuvA(4)-RuvB(12)-RuvC(2) complex forms which resolves the HJ. Mg(2+) is required as a cofactor.

It is found in the cytoplasm. The enzyme catalyses Endonucleolytic cleavage at a junction such as a reciprocal single-stranded crossover between two homologous DNA duplexes (Holliday junction).. Functionally, the RuvA-RuvB-RuvC complex processes Holliday junction (HJ) DNA during genetic recombination and DNA repair. Endonuclease that resolves HJ intermediates. Cleaves cruciform DNA by making single-stranded nicks across the HJ at symmetrical positions within the homologous arms, yielding a 5'-phosphate and a 3'-hydroxyl group; requires a central core of homology in the junction. The consensus cleavage sequence is 5'-(A/T)TT(C/G)-3'. Cleavage occurs on the 3'-side of the TT dinucleotide at the point of strand exchange. HJ branch migration catalyzed by RuvA-RuvB allows RuvC to scan DNA until it finds its consensus sequence, where it cleaves and resolves the cruciform DNA. This Teredinibacter turnerae (strain ATCC 39867 / T7901) protein is Crossover junction endodeoxyribonuclease RuvC.